The following is a 157-amino-acid chain: Ribosome maturation factor RimP (157 aa).

The protein belongs to the RimP family.

It is found in the cytoplasm. Its function is as follows. Required for maturation of 30S ribosomal subunits. This is Ribosome maturation factor RimP from Geobacillus kaustophilus (strain HTA426).